The primary structure comprises 179 residues: Bifunctional protein PyrR (179 aa).

Positions 99–111 match the PRPP-binding motif; it reads VILVDDVLYTGRT.

This sequence belongs to the purine/pyrimidine phosphoribosyltransferase family. PyrR subfamily. Homodimer and homohexamer; in equilibrium.

It catalyses the reaction UMP + diphosphate = 5-phospho-alpha-D-ribose 1-diphosphate + uracil. Regulates transcriptional attenuation of the pyrimidine nucleotide (pyr) operon by binding in a uridine-dependent manner to specific sites on pyr mRNA. This disrupts an antiterminator hairpin in the RNA and favors formation of a downstream transcription terminator, leading to a reduced expression of downstream genes. In terms of biological role, also displays a weak uracil phosphoribosyltransferase activity which is not physiologically significant. The chain is Bifunctional protein PyrR from Limosilactobacillus fermentum (strain NBRC 3956 / LMG 18251) (Lactobacillus fermentum).